Consider the following 599-residue polypeptide: Sulfite reductase [NADPH] flavoprotein alpha-component (599 aa).

A Flavodoxin-like domain is found at 64–202 (ITIISASQTG…AASEWRARVV (139 aa)). FMN is bound by residues 70–75 (SQTGNA), 117–120 (STQG), and 153–162 (LGDSSYEFFC). Residues 234–448 (DAPLVASLSV…IEHNDNFRLP (215 aa)) enclose the FAD-binding FR-type domain. Residues T322, A356, 386–389 (RLYS), 404–406 (TVG), Y410, and 419–422 (GGAS) each bind FAD. NADP(+) contacts are provided by residues 519-520 (SR), 525-529 (KVYVQ), and D561. Y599 contacts FAD.

Belongs to the NADPH-dependent sulphite reductase flavoprotein subunit CysJ family. The protein in the N-terminal section; belongs to the flavodoxin family. This sequence in the C-terminal section; belongs to the flavoprotein pyridine nucleotide cytochrome reductase family. As to quaternary structure, alpha(8)-beta(8). The alpha component is a flavoprotein, the beta component is a hemoprotein. FAD serves as cofactor. FMN is required as a cofactor.

It carries out the reaction hydrogen sulfide + 3 NADP(+) + 3 H2O = sulfite + 3 NADPH + 4 H(+). It participates in sulfur metabolism; hydrogen sulfide biosynthesis; hydrogen sulfide from sulfite (NADPH route): step 1/1. Functionally, component of the sulfite reductase complex that catalyzes the 6-electron reduction of sulfite to sulfide. This is one of several activities required for the biosynthesis of L-cysteine from sulfate. The flavoprotein component catalyzes the electron flow from NADPH -&gt; FAD -&gt; FMN to the hemoprotein component. In Shigella flexneri serotype 5b (strain 8401), this protein is Sulfite reductase [NADPH] flavoprotein alpha-component.